A 156-amino-acid polypeptide reads, in one-letter code: Cyanate hydratase (156 aa).

Residues R96, E99, and S122 contribute to the active site.

Belongs to the cyanase family.

It carries out the reaction cyanate + hydrogencarbonate + 3 H(+) = NH4(+) + 2 CO2. Catalyzes the reaction of cyanate with bicarbonate to produce ammonia and carbon dioxide. The protein is Cyanate hydratase of Burkholderia orbicola (strain MC0-3).